Here is a 768-residue protein sequence, read N- to C-terminus: UPF0313 protein VV1_2212 (768 aa).

One can recognise a Radical SAM core domain in the interval A363–D640. The [4Fe-4S] cluster site is built by C377, C381, and C384. The disordered stretch occupies residues D674–R768. Residues A679–A689 show a composition bias toward basic residues. The segment covering G719 to S731 has biased composition (polar residues).

The protein belongs to the UPF0313 family. Requires [4Fe-4S] cluster as cofactor.

This is UPF0313 protein VV1_2212 from Vibrio vulnificus (strain CMCP6).